Reading from the N-terminus, the 125-residue chain is Ribonuclease P protein component (125 aa).

This sequence belongs to the RnpA family. In terms of assembly, consists of a catalytic RNA component (M1 or rnpB) and a protein subunit.

It carries out the reaction Endonucleolytic cleavage of RNA, removing 5'-extranucleotides from tRNA precursor.. Its function is as follows. RNaseP catalyzes the removal of the 5'-leader sequence from pre-tRNA to produce the mature 5'-terminus. It can also cleave other RNA substrates such as 4.5S RNA. The protein component plays an auxiliary but essential role in vivo by binding to the 5'-leader sequence and broadening the substrate specificity of the ribozyme. The protein is Ribonuclease P protein component of Oleidesulfovibrio alaskensis (strain ATCC BAA-1058 / DSM 17464 / G20) (Desulfovibrio alaskensis).